We begin with the raw amino-acid sequence, 86 residues long: Large ribosomal subunit protein bL31B (86 aa).

This sequence belongs to the bacterial ribosomal protein bL31 family. Type B subfamily. As to quaternary structure, part of the 50S ribosomal subunit.

The chain is Large ribosomal subunit protein bL31B from Burkholderia lata (strain ATCC 17760 / DSM 23089 / LMG 22485 / NCIMB 9086 / R18194 / 383).